The chain runs to 45 residues: Putative potassium channel blocker (45 aa).

Expressed by the venom gland.

Its subcellular location is the secreted. In terms of biological role, inhibits potassium channels. The chain is Putative potassium channel blocker from Hottentotta tamulus (Eastern Indian scorpion).